The sequence spans 419 residues: Synaptotagmin-2 (419 aa).

Residues 1–62 (MRNIFKRNQE…NEINKIPLPP (62 aa)) are Vesicular-facing. A disordered region spans residues 16 to 39 (ATTTATMPIGPVDNSTESGGAGES). Asn29 carries N-linked (GlcNAc...) asparagine glycosylation. The helical transmembrane segment at 63-83 (WALIAIAVVAGLLLLTCCFCI) threads the bilayer. Residues 84–419 (CKKCCCKKKK…EVDALLGKNK (336 aa)) lie on the Cytoplasmic side of the membrane. The interval 99–138 (GKGMKNAMNMKDMKGGQDDDDAETGLTEGEGEGEEEKEPE) is disordered. The span at 116–136 (DDDDAETGLTEGEGEGEEEKE) shows a compositional bias: acidic residues. Thr122 and Thr125 each carry phosphothreonine. The segment at 133–379 (EEKEPENLGK…AIGKIFVGSN (247 aa)) is phospholipid binding. 2 consecutive C2 domains span residues 139 to 258 (NLGK…EEWR) and 270 to 403 (KLGD…AQWH). 3 residues coordinate Ca(2+): Leu169, Asp170, and Asp176. Residue Thr199 is modified to Phosphothreonine. The residue at position 227 (Tyr227) is a Phosphotyrosine. Asp228, Phe229, Asp230, Ser233, Lys234, Asp236, Asp301, Asp307, Asp361, and Asp363 together coordinate Ca(2+). Residue Thr383 is modified to Phosphothreonine.

Belongs to the synaptotagmin family. Homotetramer. Heterodimer; heterodimerizes with SYT1 in presence of calcium. Interacts with STON2. Interacts with SCAMP5. Interacts with PRRT2. It depends on Ca(2+) as a cofactor. Post-translationally, phosphorylation at Thr-199 by WNK1, changes the calcium requirement for SYT2-binding to phospholipid membranes. As to expression, expressed at the neuromuscular junction. Expressed in melanocytes.

Its subcellular location is the cytoplasmic vesicle. It localises to the secretory vesicle. The protein resides in the synaptic vesicle membrane. The protein localises to the chromaffin granule membrane. It is found in the cytoplasm. Its function is as follows. Exhibits calcium-dependent phospholipid and inositol polyphosphate binding properties. May have a regulatory role in the membrane interactions during trafficking of synaptic vesicles at the active zone of the synapse. Plays a role in dendrite formation by melanocytes. This Homo sapiens (Human) protein is Synaptotagmin-2.